The chain runs to 275 residues: Probable siderophore transport system ATP-binding protein YusV (275 aa).

In terms of domain architecture, ABC transporter spans 6–242 (ISTETLSLGY…DLVQNVFSMN (237 aa)). Residue 38–45 (GSNGCGKS) coordinates ATP.

This sequence belongs to the ABC transporter superfamily. In terms of assembly, the iron-hydroxamate siderophore complex is composed of one ATP-binding protein (YusV), two transmembrane proteins (YfiZ and YfhA) and a solute-binding protein (YfiY); the catechoplate siderophore complex is composed of one ATP-binding protein (YusV), two transmembrane proteins (FeuB and FeuC) and a solute-binding protein (FeuA).

The protein resides in the cell membrane. Its function is as follows. Provides the ATPase subunit for at least 2 ABC transporter complexes; YfiYZ/YfhA/YusV involved in import of the iron-hydroxamate siderophores schizokinen, arthrobactin and corprogen, and FeuABC/YusV involved in import of the catecholate siderophores bacillibactin and enterobactin. Probably responsible for energy coupling to the transport system. This chain is Probable siderophore transport system ATP-binding protein YusV (yusV), found in Bacillus subtilis (strain 168).